The following is a 370-amino-acid chain: Pyruvate dehydrogenase E1 component subunit alpha (370 aa).

Heterodimer of an alpha and a beta chain. It depends on thiamine diphosphate as a cofactor.

The enzyme catalyses N(6)-[(R)-lipoyl]-L-lysyl-[protein] + pyruvate + H(+) = N(6)-[(R)-S(8)-acetyldihydrolipoyl]-L-lysyl-[protein] + CO2. Functionally, the pyruvate dehydrogenase complex catalyzes the overall conversion of pyruvate to acetyl-CoA and CO(2). It contains multiple copies of three enzymatic components: pyruvate dehydrogenase (E1), dihydrolipoamide acetyltransferase (E2) and lipoamide dehydrogenase (E3). This is Pyruvate dehydrogenase E1 component subunit alpha (pdhA) from Staphylococcus epidermidis (strain ATCC 35984 / DSM 28319 / BCRC 17069 / CCUG 31568 / BM 3577 / RP62A).